The following is a 355-amino-acid chain: S-adenosylmethionine:tRNA ribosyltransferase-isomerase (355 aa).

The protein belongs to the QueA family. Monomer.

It is found in the cytoplasm. The catalysed reaction is 7-aminomethyl-7-carbaguanosine(34) in tRNA + S-adenosyl-L-methionine = epoxyqueuosine(34) in tRNA + adenine + L-methionine + 2 H(+). It functions in the pathway tRNA modification; tRNA-queuosine biosynthesis. Functionally, transfers and isomerizes the ribose moiety from AdoMet to the 7-aminomethyl group of 7-deazaguanine (preQ1-tRNA) to give epoxyqueuosine (oQ-tRNA). This chain is S-adenosylmethionine:tRNA ribosyltransferase-isomerase, found in Burkholderia orbicola (strain AU 1054).